The primary structure comprises 263 residues: Apolipoprotein A-I (263 aa).

An N-terminal signal peptide occupies residues 1–18 (MKAVVLAVAVLFLTGSQA). 2 repeat units span residues 66–87 (LKLL…SELG) and 88–109 (PVTQ…QEMN). Residues 66–263 (LKLLDNWDTL…DEVSKKLSAQ (198 aa)) are 10 X approximate tandem repeats. Met-108 is subject to Methionine sulfoxide. The 3; half-length repeat unit spans residues 110 to 120 (KDLVEVKEKVQ). 5 repeat units span residues 121–142 (PYLK…KKVE), 143–164 (PLGT…EKLT), 165–186 (PLGE…AQLG), 187–206 (PYSD…LKDS), and 207–228 (ASLA…EKAK). The stretch at 229 to 239 (PALEDLRLGLL) is one 9; half-length repeat. The stretch at 240–263 (PVLESLKASFLSSIDEVSKKLSAQ) is repeat 10.

It belongs to the apolipoprotein A1/A4/E family. Homodimer. Interacts with APOA1BP and CLU. Component of a sperm activating protein complex (SPAP), consisting of APOA1, an immunoglobulin heavy chain, an immunoglobulin light chain and albumin. Interacts with NDRG1. Interacts with SCGB3A2. Interacts with NAXE and YJEFN3. Glycosylated. Post-translationally, palmitoylated. In terms of processing, phosphorylation sites are present in the extracellular medium.

The protein localises to the secreted. Its function is as follows. Participates in the reverse transport of cholesterol from tissues to the liver for excretion by promoting cholesterol efflux from tissues and by acting as a cofactor for the lecithin cholesterol acyltransferase (LCAT). As part of the SPAP complex, activates spermatozoa motility. This is Apolipoprotein A-I (APOA1) from Octodon degus (Degu).